The primary structure comprises 495 residues: Chromosomal replication initiator protein DnaA (495 aa).

The segment at 1–83 (MSVALWQQCL…KVQLTVGSRR (83 aa)) is domain I, interacts with DnaA modulators. The interval 83-158 (RNVAMSSPRD…QVEGSLKHQS (76 aa)) is domain II. Positions 86–127 (AMSSPRDLGAPVSATTMNASRPTEAPAVHAAPRAKGDYADEQ) are disordered. The interval 159-375 (GLNPNFTFET…GALKKVIADS (217 aa)) is domain III, AAA+ region. The ATP site is built by G203, G205, K206, and T207. The segment at 376–495 (HFMGKPITQD…YKNLLRLLTS (120 aa)) is domain IV, binds dsDNA.

This sequence belongs to the DnaA family. In terms of assembly, oligomerizes as a right-handed, spiral filament on DNA at oriC.

The protein resides in the cytoplasm. In terms of biological role, plays an essential role in the initiation and regulation of chromosomal replication. ATP-DnaA binds to the origin of replication (oriC) to initiate formation of the DNA replication initiation complex once per cell cycle. Binds the DnaA box (a 9 base pair repeat at the origin) and separates the double-stranded (ds)DNA. Forms a right-handed helical filament on oriC DNA; dsDNA binds to the exterior of the filament while single-stranded (ss)DNA is stabiized in the filament's interior. The ATP-DnaA-oriC complex binds and stabilizes one strand of the AT-rich DNA unwinding element (DUE), permitting loading of DNA polymerase. After initiation quickly degrades to an ADP-DnaA complex that is not apt for DNA replication. Binds acidic phospholipids. The chain is Chromosomal replication initiator protein DnaA from Chromohalobacter salexigens (strain ATCC BAA-138 / DSM 3043 / CIP 106854 / NCIMB 13768 / 1H11).